The chain runs to 284 residues: Pantothenate synthetase (284 aa).

Residue 30–37 (MGNLHEGH) participates in ATP binding. Histidine 37 (proton donor) is an active-site residue. Glutamine 61 lines the (R)-pantoate pocket. Beta-alanine is bound at residue glutamine 61. An ATP-binding site is contributed by 149–152 (GEKD). Glutamine 155 contributes to the (R)-pantoate binding site. ATP is bound by residues valine 178 and 186–189 (LSSR).

It belongs to the pantothenate synthetase family. In terms of assembly, homodimer.

It is found in the cytoplasm. The enzyme catalyses (R)-pantoate + beta-alanine + ATP = (R)-pantothenate + AMP + diphosphate + H(+). The protein operates within cofactor biosynthesis; (R)-pantothenate biosynthesis; (R)-pantothenate from (R)-pantoate and beta-alanine: step 1/1. Functionally, catalyzes the condensation of pantoate with beta-alanine in an ATP-dependent reaction via a pantoyl-adenylate intermediate. This is Pantothenate synthetase from Yersinia pestis bv. Antiqua (strain Antiqua).